The following is a 493-amino-acid chain: Inosine-5'-monophosphate dehydrogenase (493 aa).

CBS domains are found at residues 97-155 (VIID…NAPI) and 159-219 (MTSE…AKDE). NAD(+) contacts are provided by residues D253 and 303–305 (GIG). 2 residues coordinate K(+): G305 and G307. S308 lines the IMP pocket. C310 is a K(+) binding site. The active-site Thioimidate intermediate is C310. IMP is bound by residues 343 to 345 (DGG), 366 to 367 (GS), and 390 to 394 (YRGMG). The active-site Proton acceptor is R406. E421 lines the IMP pocket. Residues E475, S476, and H477 each coordinate K(+).

This sequence belongs to the IMPDH/GMPR family. Homotetramer. K(+) is required as a cofactor.

It carries out the reaction IMP + NAD(+) + H2O = XMP + NADH + H(+). It functions in the pathway purine metabolism; XMP biosynthesis via de novo pathway; XMP from IMP: step 1/1. Mycophenolic acid (MPA) is a non-competitive inhibitor that prevents formation of the closed enzyme conformation by binding to the same site as the amobile flap. In contrast, mizoribine monophosphate (MZP) is a competitive inhibitor that induces the closed conformation. MPA is a potent inhibitor of mammalian IMPDHs but a poor inhibitor of the bacterial enzymes. MZP is a more potent inhibitor of bacterial IMPDH. Its function is as follows. Catalyzes the conversion of inosine 5'-phosphate (IMP) to xanthosine 5'-phosphate (XMP), the first committed and rate-limiting step in the de novo synthesis of guanine nucleotides, and therefore plays an important role in the regulation of cell growth. In Streptococcus pyogenes serotype M1, this protein is Inosine-5'-monophosphate dehydrogenase.